We begin with the raw amino-acid sequence, 313 residues long: Acetaldehyde dehydrogenase 2 (313 aa).

Residue 12–15 (SGNI) coordinates NAD(+). C132 functions as the Acyl-thioester intermediate in the catalytic mechanism. Residues 163–171 (SAGPGTRAN) and N287 contribute to the NAD(+) site.

This sequence belongs to the acetaldehyde dehydrogenase family.

It carries out the reaction acetaldehyde + NAD(+) + CoA = acetyl-CoA + NADH + H(+). This chain is Acetaldehyde dehydrogenase 2 (amnH), found in Paraburkholderia xenovorans (strain LB400).